The chain runs to 131 residues: Large ribosomal subunit protein bL12 (131 aa).

It belongs to the bacterial ribosomal protein bL12 family. Homodimer. Part of the ribosomal stalk of the 50S ribosomal subunit. Forms a multimeric L10(L12)X complex, where L10 forms an elongated spine to which 2 to 4 L12 dimers bind in a sequential fashion. Binds GTP-bound translation factors.

Functionally, forms part of the ribosomal stalk which helps the ribosome interact with GTP-bound translation factors. Is thus essential for accurate translation. This Prochlorococcus marinus (strain MIT 9515) protein is Large ribosomal subunit protein bL12.